We begin with the raw amino-acid sequence, 138 residues long: MTTHNRPARVAEEFRHELSAILARGLKDPRITGFVTVTGSKMSPDLKEATVYVSIHGDERVRKDTFAGLQAAAGFLQREVSRALRLRNTPHLRFVYDESVARGDRIERLLREARTQGQAPAADVEPAPGAAPDDEAEE.

The interval 112–138 (EARTQGQAPAADVEPAPGAAPDDEAEE) is disordered. Positions 119 to 131 (APAADVEPAPGAA) are enriched in low complexity.

The protein belongs to the RbfA family. Monomer. Binds 30S ribosomal subunits, but not 50S ribosomal subunits or 70S ribosomes.

The protein resides in the cytoplasm. Its function is as follows. One of several proteins that assist in the late maturation steps of the functional core of the 30S ribosomal subunit. Associates with free 30S ribosomal subunits (but not with 30S subunits that are part of 70S ribosomes or polysomes). Required for efficient processing of 16S rRNA. May interact with the 5'-terminal helix region of 16S rRNA. This chain is Ribosome-binding factor A, found in Anaeromyxobacter sp. (strain K).